We begin with the raw amino-acid sequence, 464 residues long: Soluble pyridine nucleotide transhydrogenase (464 aa).

35–44 (DSRRQVGGNC) is an FAD binding site.

It belongs to the class-I pyridine nucleotide-disulfide oxidoreductase family. Requires FAD as cofactor.

The protein resides in the cytoplasm. It catalyses the reaction NAD(+) + NADPH = NADH + NADP(+). In terms of biological role, conversion of NADPH, generated by peripheral catabolic pathways, to NADH, which can enter the respiratory chain for energy generation. The chain is Soluble pyridine nucleotide transhydrogenase from Pseudomonas putida (strain W619).